A 330-amino-acid polypeptide reads, in one-letter code: Succinylglutamate desuccinylase (330 aa).

The Zn(2+) site is built by His53, Glu56, and His147. Glu210 is an active-site residue.

Belongs to the AspA/AstE family. Succinylglutamate desuccinylase subfamily. Requires Zn(2+) as cofactor.

The enzyme catalyses N-succinyl-L-glutamate + H2O = L-glutamate + succinate. It participates in amino-acid degradation; L-arginine degradation via AST pathway; L-glutamate and succinate from L-arginine: step 5/5. Its function is as follows. Transforms N(2)-succinylglutamate into succinate and glutamate. This Yersinia enterocolitica serotype O:8 / biotype 1B (strain NCTC 13174 / 8081) protein is Succinylglutamate desuccinylase.